Here is a 256-residue protein sequence, read N- to C-terminus: Protein CUSTOS (256 aa).

Low complexity predominate over residues 1–19 (MVAPSGAMSDSENSSSSSS). Disordered regions lie at residues 1–83 (MVAP…TPEF), 127–163 (FTSI…QRCR), and 227–256 (IQKK…KPEN). Ser62 is subject to Phosphoserine. Positions 63 to 83 (RRHEVNQHEEDGNDLRTTPEF) are enriched in basic and acidic residues. Thr80 is subject to Phosphothreonine. At Ser139 the chain carries Phosphoserine. Residues 228–235 (QKKRKKKA) carry the Nucleolar localization signal (NLS) motif. Positions 228-237 (QKKRKKKAKK) are enriched in basic residues. Low complexity predominate over residues 246–256 (PAECAAAKPEN).

The protein belongs to the CUSTOS family.

It is found in the nucleus envelope. In terms of biological role, plays a role in the regulation of Wnt signaling pathway during early development. In Mus musculus (Mouse), this protein is Protein CUSTOS.